We begin with the raw amino-acid sequence, 310 residues long: Homoserine O-acetyltransferase (310 aa).

Residue cysteine 142 is the Acyl-thioester intermediate of the active site. Residues lysine 163 and serine 192 each contribute to the substrate site. Histidine 235 (proton acceptor) is an active-site residue. Residue glutamate 237 is part of the active site. Residue arginine 249 coordinates substrate.

It belongs to the MetA family.

The protein localises to the cytoplasm. The catalysed reaction is L-homoserine + acetyl-CoA = O-acetyl-L-homoserine + CoA. The protein operates within amino-acid biosynthesis; L-methionine biosynthesis via de novo pathway; O-acetyl-L-homoserine from L-homoserine: step 1/1. In terms of biological role, transfers an acetyl group from acetyl-CoA to L-homoserine, forming acetyl-L-homoserine. This chain is Homoserine O-acetyltransferase, found in Lachnospira eligens (strain ATCC 27750 / DSM 3376 / VPI C15-48 / C15-B4) (Eubacterium eligens).